Reading from the N-terminus, the 291-residue chain is Flavin-dependent thymidylate synthase (291 aa).

In terms of domain architecture, ThyX spans 31–241 (GFVRVVDYMG…PMVHAAFVEY (211 aa)). FAD-binding positions include Ser77, 100–102 (RHR), and Glu108. DUMP contacts are provided by residues 97-100 (QWVR), 108-112 (EYSAR), and Arg180. A ThyX motif motif is present at residues 100–110 (RHRTASINEYS). 196 to 198 (NLH) serves as a coordination point for FAD. Position 207 (Arg207) interacts with dUMP. Arg207 functions as the Involved in ionization of N3 of dUMP, leading to its activation in the catalytic mechanism.

Belongs to the thymidylate synthase ThyX family. In terms of assembly, homotetramer. It depends on FAD as a cofactor.

It catalyses the reaction dUMP + (6R)-5,10-methylene-5,6,7,8-tetrahydrofolate + NADPH + H(+) = dTMP + (6S)-5,6,7,8-tetrahydrofolate + NADP(+). Its pathway is pyrimidine metabolism; dTTP biosynthesis. In terms of biological role, catalyzes the reductive methylation of 2'-deoxyuridine-5'-monophosphate (dUMP) to 2'-deoxythymidine-5'-monophosphate (dTMP) while utilizing 5,10-methylenetetrahydrofolate (mTHF) as the methyl donor, and NADPH and FADH(2) as the reductant. The polypeptide is Flavin-dependent thymidylate synthase (Anaplasma marginale (strain St. Maries)).